A 233-amino-acid chain; its full sequence is Small ribosomal subunit protein uS3 (233 aa).

The KH type-2 domain occupies 39–107 (VRQYLNKELA…PAQINIAEVR (69 aa)).

The protein belongs to the universal ribosomal protein uS3 family. As to quaternary structure, part of the 30S ribosomal subunit. Forms a tight complex with proteins S10 and S14.

Functionally, binds the lower part of the 30S subunit head. Binds mRNA in the 70S ribosome, positioning it for translation. This chain is Small ribosomal subunit protein uS3, found in Cronobacter sakazakii (strain ATCC BAA-894) (Enterobacter sakazakii).